A 401-amino-acid polypeptide reads, in one-letter code: Enoyl-[acyl-carrier-protein] reductase [NADH] 1 (401 aa).

Residues 48–53 (GSSSGY), 74–75 (FE), 111–112 (DA), and 139–140 (LA) each bind NAD(+). Tyr-225 provides a ligand contact to substrate. The active-site Proton donor is the Tyr-235. Residues Lys-244 and 273-275 (VVT) each bind NAD(+).

The protein belongs to the TER reductase family. In terms of assembly, monomer.

The catalysed reaction is a 2,3-saturated acyl-[ACP] + NAD(+) = a (2E)-enoyl-[ACP] + NADH + H(+). The enzyme catalyses a 2,3-saturated acyl-CoA + NAD(+) = a (2E)-enoyl-CoA + NADH + H(+). It carries out the reaction (2E)-butenoyl-[ACP] + NADH + H(+) = butanoyl-[ACP] + NAD(+). It catalyses the reaction butanoyl-CoA + NAD(+) = (2E)-butenoyl-CoA + NADH + H(+). It functions in the pathway lipid metabolism; fatty acid biosynthesis. Weakly inhibited by triclosan. Functionally, involved in the final reduction of the elongation cycle of fatty acid synthesis (FAS II). Catalyzes the NADH-dependent reduction of a carbon-carbon double bond in an enoyl moiety that is covalently linked to an acyl carrier protein (ACP). It can use both crotonyl-CoA and crotonyl-ACP. The protein is Enoyl-[acyl-carrier-protein] reductase [NADH] 1 of Vibrio cholerae serotype O1 (strain ATCC 39315 / El Tor Inaba N16961).